A 1162-amino-acid polypeptide reads, in one-letter code: Sialidase (1162 aa).

BNR repeat units follow at residues 23–34 (KYSVDDGETWET), 163–174 (FYSEDDGKTWKF), and 209–220 (YESSDMEKPWVE). N-linked (GlcNAc...) asparagine glycans are attached at residues Asn342 and Asn394. Positions 587–1123 (HMDSSSDSSA…STPSTPAGSS (537 aa)) are disordered. Residues 589–615 (DSSSDSSAHSTPSTPADSSAHSTPSTP) are compositionally biased toward low complexity. Residues 589–1120 (DSSSDSSAHS…SAHSTPSTPA (532 aa)) are 44 X 12 AA tandem repeats, LTR domain. Composition is skewed to polar residues over residues 616 to 689 (VDSS…TPVD) and 699 to 1123 (PADS…AGSS). The N-linked (GlcNAc...) asparagine glycan is linked to Asn1125.

Belongs to the glycosyl hydrolase 33 family.

The protein resides in the cell membrane. The catalysed reaction is Hydrolysis of alpha-(2-&gt;3)-, alpha-(2-&gt;6)-, alpha-(2-&gt;8)- glycosidic linkages of terminal sialic acid residues in oligosaccharides, glycoproteins, glycolipids, colominic acid and synthetic substrates.. Its function is as follows. Developmentally regulated neuraminidase implicated in parasite invasion of cells. The sequence is that of Sialidase (TCNA) from Trypanosoma cruzi.